The sequence spans 347 residues: Haptoglobin (347 aa).

The signal sequence occupies residues 1-18 (MSDLGAVVALLLWGQLFA). Residues 31-88 (DGCPKPPMIANGYVEHLVRYQCKNYYRLRTEGDGVYTLNNEKQWTNKAVGDKLPECEA) form the Sushi domain. Intrachain disulfides connect Cys-52–Cys-86 and Cys-90–Cys-207. The segment at 103–347 (ILGGHLDAKG…DWVQKTIAEN (245 aa)) is serine protease. N-linked (GlcNAc...) asparagine glycosylation is found at Asn-125, Asn-148, Asn-152, Asn-182, and Asn-232. Disulfide bonds link Cys-250-Cys-281 and Cys-292-Cys-322. The interaction with CD163 stretch occupies residues 259 to 264 (VPEKKT).

The protein belongs to the peptidase S1 family. As to quaternary structure, tetramer of two alpha and two beta chains; disulfide-linked. The hemoglobin/haptoglobin complex is composed of a haptoglobin dimer bound to two hemoglobin alpha-beta dimers. Interacts with CD163. Interacts with ERGIC3. As to expression, expressed by the liver and secreted in plasma.

Its subcellular location is the secreted. Functionally, as a result of hemolysis, hemoglobin is found to accumulate in the kidney and is secreted in the urine. Haptoglobin captures, and combines with free plasma hemoglobin to allow hepatic recycling of heme iron and to prevent kidney damage. Haptoglobin also acts as an antioxidant, has antibacterial activity and plays a role in modulating many aspects of the acute phase response. Hemoglobin/haptoglobin complexes are rapidly cleared by the macrophage CD163 scavenger receptor expressed on the surface of liver Kupfer cells through an endocytic lysosomal degradation pathway. The sequence is that of Haptoglobin (HP) from Papio hamadryas (Hamadryas baboon).